Consider the following 641-residue polypeptide: Phosphomethylpyrimidine synthase (641 aa).

The segment covering 1-13 (MNIRSNPDTTRPA) has biased composition (polar residues). The tract at residues 1 to 21 (MNIRSNPDTTRPAVTTGGLPS) is disordered. Residues Asn221, Met250, Tyr279, His315, 335–337 (SRG), 376–379 (DGLR), and Glu415 each bind substrate. Residue His419 participates in Zn(2+) binding. Tyr442 contacts substrate. His483 is a Zn(2+) binding site. Positions 563, 566, and 571 each coordinate [4Fe-4S] cluster.

Belongs to the ThiC family. As to quaternary structure, homodimer. The cofactor is [4Fe-4S] cluster.

The enzyme catalyses 5-amino-1-(5-phospho-beta-D-ribosyl)imidazole + S-adenosyl-L-methionine = 4-amino-2-methyl-5-(phosphooxymethyl)pyrimidine + CO + 5'-deoxyadenosine + formate + L-methionine + 3 H(+). The protein operates within cofactor biosynthesis; thiamine diphosphate biosynthesis. Its function is as follows. Catalyzes the synthesis of the hydroxymethylpyrimidine phosphate (HMP-P) moiety of thiamine from aminoimidazole ribotide (AIR) in a radical S-adenosyl-L-methionine (SAM)-dependent reaction. The chain is Phosphomethylpyrimidine synthase from Rhodopseudomonas palustris (strain BisB5).